A 368-amino-acid chain; its full sequence is MVVPTPFYVLRGHSSSVTSVLFDANEYLYSGDEAGFVICWCLTSMRPKCAWRAHTKTILGMQIVKGGALCTHGRDCRLVTWKIDFNCMTDNFMSLSKLAELQNYGPEASSETEKSSAFISIHSNIVVNSLTFCPFSYSPQSKIVVLCNTLNFEELDVYDDESLYHPQTHKEDCGKRLQTRIQPEESVGKTGSVMSTSVTVTDEKYVLLAAGYESGHVVQYICSLENVKTVTLDFKAVWKMVYAYKSHSQPVLSVEYAGSKLFSTGADDCICLHPTPSSIADDLGSLPHPIFRKTKHCGQQNIRIRSDNKILATAGWDGRGRVYSCQTLAPLAVLKYHSDGINSLAFHPGSNVIALASKDTRISLWKLY.

WD repeat units lie at residues 12 to 50 (GHSSSVTSVLFDANEYLYSGDEAGFVICWCLTSMRPKCA), 53 to 91 (AHTKTILGMQIVKGGALCTHGRDCRLVTWKIDFNCMTDN), 246 to 283 (SHSQPVLSVEYAGSKLFSTGADDCICLHPTPSSIADDL), 294 to 333 (TKHCGQQNIRIRSDNKILATAGWDGRGRVYSCQTLAPLAV), and 336 to 368 (YHSDGINSLAFHPGSNVIALASKDTRISLWKLY).

It belongs to the WD repeat ASA1 family. As to quaternary structure, component of the ASTRA chromatin-remodeling machinery complex.

The protein resides in the cytoplasm. The protein localises to the nucleus. In terms of biological role, component of the ASTRA complex probably involved in chromatin remodeling. In Schizosaccharomyces pombe (strain 972 / ATCC 24843) (Fission yeast), this protein is ASTRA-associated protein 1 (asa1).